The sequence spans 640 residues: Insulin-like growth factor 1 receptor (640 aa).

Fibronectin type-III domains follow at residues 5–101 and 107–200; these read VPRP…TMPA and IPGP…VQAK. The Extracellular segment spans residues 14 to 208; it reads EVMQIANTTM…AKTTYENFIH (195 aa). Asparagine 20, asparagine 29, asparagine 37, asparagine 173, and asparagine 186 each carry an N-linked (GlcNAc...) asparagine glycan. Residues 209–232 traverse the membrane as a helical segment; it reads LMIALPIAVLLIVGGLVIMLYVFH. Residues 233–640 lie on the Cytoplasmic side of the membrane; that stretch reads RKRNSSRLGN…ALPLPQSSTC (408 aa). The IRS1- and SHC1-binding motif lies at 250–253; that stretch reads NPEY. The residue at position 253 (tyrosine 253) is a Phosphotyrosine. Residues 272–547 enclose the Protein kinase domain; it reads ITMSRELGQG…SVKDEMEAGF (276 aa). ATP-binding positions include 278–286 and lysine 306; that span reads LGQGSFGMV. Residue aspartate 408 is the Proton acceptor of the active site. Residues tyrosine 434, tyrosine 438, and tyrosine 439 each carry the phosphotyrosine; by autocatalysis modification. Residues lysine 441 and lysine 444 each participate in a glycyl lysine isopeptide (Lys-Gly) (interchain with G-Cter in ubiquitin) cross-link. The residue at position 551 (serine 551) is a Phosphoserine; by GSK3-beta. Position 555 is a phosphoserine (serine 555). The segment at 555–640 is disordered; sequence SEENKPPEPE…ALPLPQSSTC (86 aa). Residues 563–572 are compositionally biased toward acidic residues; the sequence is PEELDLEPEN. Positions 573 to 589 are enriched in low complexity; the sequence is MESVPLDPSASSASLPL. Over residues 590-599 the composition is skewed to basic and acidic residues; that stretch reads PDRHSGHKAE.

Belongs to the protein kinase superfamily. Tyr protein kinase family. Insulin receptor subfamily. In terms of assembly, tetramer of 2 alpha and 2 beta chains linked by disulfide bonds. The alpha chains contribute to the formation of the ligand-binding domain, while the beta chain carries the kinase domain. Interacts with PIK3R1 and with the PTB/PID domains of IRS1 and SHC1 in vitro when autophosphorylated on tyrosine residues. Forms a hybrid receptor with INSR, the hybrid is a tetramer consisting of 1 alpha chain and 1 beta chain of INSR and 1 alpha chain and 1 beta chain of IGF1R. Interacts with ARRB1 and ARRB2. Interacts with GRB10. Interacts with RACK1. Interacts with SOCS1, SOCS2 and SOCS3. Interacts with 14-3-3 proteins. Interacts with NMD2. Interacts with MAP3K5. Interacts with STAT3. Interacts (nascent precursor form) with ZFAND2B. In terms of processing, autophosphorylated on tyrosine residues in response to ligand binding. Autophosphorylation occurs in trans, i.e. one subunit of the dimeric receptor phosphorylates tyrosine residues on the other subunit. Autophosphorylation occurs in a sequential manner; Tyr-438 is predominantly phosphorylated first, followed by phosphorylation of Tyr-434 and Tyr-439. While every single phosphorylation increases kinase activity, all three tyrosine residues in the kinase activation loop (Tyr-438, Tyr-434 and Tyr-439) have to be phosphorylated for optimal activity. Can be autophosphorylated at additional tyrosine residues (in vitro). Autophosphorylated is followed by phosphorylation of juxtamembrane tyrosines and C-terminal serines. May also be phosphorylated at Tyr-434 and Tyr-439 by mTORC2. Phosphorylation of Tyr-253 is required for IRS1- and SHC1-binding. Phosphorylation of Ser-551 by GSK-3beta restrains kinase activity and promotes cell surface expression, it requires a priming phosphorylation at Ser-555. Dephosphorylated by PTPN1. Polyubiquitinated at Lys-441 and Lys-444 through both 'Lys-48' and 'Lys-29' linkages, promoting receptor endocytosis and subsequent degradation by the proteasome. Ubiquitination is facilitated by pre-existing phosphorylation. Post-translationally, sumoylated with SUMO1. In terms of processing, controlled by regulated intramembrane proteolysis (RIP). Undergoes metalloprotease-dependent constitutive ectodomain shedding to produce a membrane-anchored 52 kDa C-Terminal fragment which is further processed by presenilin gamma-secretase to yield an intracellular 50 kDa fragment.

It is found in the cell membrane. The enzyme catalyses L-tyrosyl-[protein] + ATP = O-phospho-L-tyrosyl-[protein] + ADP + H(+). Its activity is regulated as follows. Activated by autophosphorylation at Tyr-434, Tyr-438 and Tyr-439 on the kinase activation loop; phosphorylation at all three tyrosine residues is required for optimal kinase activity. Inhibited by MSC1609119A-1, BMS-754807, PQIP, benzimidazole pyridinone, isoquinolinedione, bis-azaindole, 3-cyanoquinoline, 2,4-bis-arylamino-1,3-pyrimidine, pyrrolopyrimidine, pyrrole-5-carboxaldehyde, picropodophyllin (PPP), tyrphostin derivatives. While most inhibitors bind to the ATP binding pocket, MSC1609119A-1 functions as allosteric inhibitor and binds close to the DFG motif and the activation loop. Functionally, receptor tyrosine kinase which mediates actions of insulin-like growth factor 1 (IGF1). Binds IGF1 with high affinity and IGF2 and insulin (INS) with a lower affinity. The activated IGF1R is involved in cell growth and survival control. IGF1R is crucial for tumor transformation and survival of malignant cell. Ligand binding activates the receptor kinase, leading to receptor autophosphorylation, and tyrosines phosphorylation of multiple substrates, that function as signaling adapter proteins including, the insulin-receptor substrates (IRS1/2), Shc and 14-3-3 proteins. Phosphorylation of IRSs proteins lead to the activation of two main signaling pathways: the PI3K-AKT/PKB pathway and the Ras-MAPK pathway. The result of activating the MAPK pathway is increased cellular proliferation, whereas activating the PI3K pathway inhibits apoptosis and stimulates protein synthesis. Phosphorylated IRS1 can activate the 85 kDa regulatory subunit of PI3K (PIK3R1), leading to activation of several downstream substrates, including protein AKT/PKB. AKT phosphorylation, in turn, enhances protein synthesis through mTOR activation and triggers the antiapoptotic effects of IGFIR through phosphorylation and inactivation of BAD. In parallel to PI3K-driven signaling, recruitment of Grb2/SOS by phosphorylated IRS1 or Shc leads to recruitment of Ras and activation of the ras-MAPK pathway. In addition to these two main signaling pathways IGF1R signals also through the Janus kinase/signal transducer and activator of transcription pathway (JAK/STAT). Phosphorylation of JAK proteins can lead to phosphorylation/activation of signal transducers and activators of transcription (STAT) proteins. In particular activation of STAT3, may be essential for the transforming activity of IGF1R. The JAK/STAT pathway activates gene transcription and may be responsible for the transforming activity. JNK kinases can also be activated by the IGF1R. IGF1 exerts inhibiting activities on JNK activation via phosphorylation and inhibition of MAP3K5/ASK1, which is able to directly associate with the IGF1R. When present in a hybrid receptor with INSR, binds IGF1. In Bos taurus (Bovine), this protein is Insulin-like growth factor 1 receptor (IGF1R).